The following is a 370-amino-acid chain: Protein STRICTOSIDINE SYNTHASE-LIKE 9 (370 aa).

The N-terminal stretch at 1 to 26 (MPINQKIPTWFAVPAVFAVLSVISYQ) is a signal peptide. Residues asparagine 97 and asparagine 171 are each glycosylated (N-linked (GlcNAc...) asparagine).

Belongs to the strictosidine synthase family.

Its subcellular location is the vacuole. The chain is Protein STRICTOSIDINE SYNTHASE-LIKE 9 from Arabidopsis thaliana (Mouse-ear cress).